The primary structure comprises 415 residues: Isocitrate dehydrogenase [NADP] (415 aa).

NADP(+) is bound by residues 77-79 (TIT) and arginine 84. Threonine 79 is a substrate binding site. Substrate is bound by residues 96–102 (SPNGTIR), arginine 111, and arginine 134. Aspartate 254 serves as a coordination point for Mn(2+). Lysine 262 is an NADP(+) binding site. Aspartate 277 is a binding site for Mn(2+). Residues 312 to 317 (GTVTRH) and asparagine 330 contribute to the NADP(+) site.

It belongs to the isocitrate and isopropylmalate dehydrogenases family. As to quaternary structure, heterodimer. Requires Mg(2+) as cofactor. Mn(2+) is required as a cofactor.

Its subcellular location is the cytoplasm. The enzyme catalyses D-threo-isocitrate + NADP(+) = 2-oxoglutarate + CO2 + NADPH. Its function is as follows. May supply 2-oxoglutarate for amino acid biosynthesis and ammonia assimilation via the glutamine synthetase/glutamate synthase (GS/GOGAT) pathway. In Nicotiana tabacum (Common tobacco), this protein is Isocitrate dehydrogenase [NADP].